Here is a 253-residue protein sequence, read N- to C-terminus: DNA repair protein RecO (253 aa).

It belongs to the RecO family.

Its function is as follows. Involved in DNA repair and RecF pathway recombination. The sequence is that of DNA repair protein RecO from Dehalococcoides mccartyi (strain ATCC BAA-2100 / JCM 16839 / KCTC 5957 / BAV1).